We begin with the raw amino-acid sequence, 431 residues long: Glutamyl-tRNA(Gln) amidotransferase subunit A (431 aa).

Active-site charge relay system residues include K55 and S130. S154 acts as the Acyl-ester intermediate in catalysis.

It belongs to the amidase family. GatA subfamily. As to quaternary structure, heterotrimer of A, B and C subunits.

It catalyses the reaction L-glutamyl-tRNA(Gln) + L-glutamine + ATP + H2O = L-glutaminyl-tRNA(Gln) + L-glutamate + ADP + phosphate + H(+). Allows the formation of correctly charged Gln-tRNA(Gln) through the transamidation of misacylated Glu-tRNA(Gln) in organisms which lack glutaminyl-tRNA synthetase. The reaction takes place in the presence of glutamine and ATP through an activated gamma-phospho-Glu-tRNA(Gln). The chain is Glutamyl-tRNA(Gln) amidotransferase subunit A from Methanococcus vannielii (strain ATCC 35089 / DSM 1224 / JCM 13029 / OCM 148 / SB).